The chain runs to 125 residues: Small ribosomal subunit protein uS13 (125 aa).

The tract at residues 95–125 (GLPLRGQRTKTNARTRKGKRKTVANKKIASK) is disordered.

The protein belongs to the universal ribosomal protein uS13 family. Part of the 30S ribosomal subunit. Forms a loose heterodimer with protein S19. Forms two bridges to the 50S subunit in the 70S ribosome.

Located at the top of the head of the 30S subunit, it contacts several helices of the 16S rRNA. In the 70S ribosome it contacts the 23S rRNA (bridge B1a) and protein L5 of the 50S subunit (bridge B1b), connecting the 2 subunits; these bridges are implicated in subunit movement. Contacts the tRNAs in the A and P-sites. The chain is Small ribosomal subunit protein uS13 from Borrelia garinii subsp. bavariensis (strain ATCC BAA-2496 / DSM 23469 / PBi) (Borreliella bavariensis).